The sequence spans 366 residues: D-alanine--D-alanine ligase (366 aa).

Residues 150-353 (KRVLRDAGVP…YPALVDRLIV (204 aa)) enclose the ATP-grasp domain. 180–235 (IGQLGLPLFIKPASQGSSVGVSKVTDRAGFAAALALAFRYDAKVLVEQGISGREIE) is an ATP binding site. Residues D307, E320, and N322 each coordinate Mg(2+).

It belongs to the D-alanine--D-alanine ligase family. Mg(2+) is required as a cofactor. Requires Mn(2+) as cofactor.

Its subcellular location is the cytoplasm. It catalyses the reaction 2 D-alanine + ATP = D-alanyl-D-alanine + ADP + phosphate + H(+). It functions in the pathway cell wall biogenesis; peptidoglycan biosynthesis. In terms of biological role, cell wall formation. This is D-alanine--D-alanine ligase from Sodalis glossinidius (strain morsitans).